The sequence spans 415 residues: Ornithine cyclodeaminase (415 aa).

Residues N241, A242, D320, T352, L354, H355, D373, D396, and V397 each coordinate NAD(+).

This sequence belongs to the AgrE/ArgZ ornithine cyclodeaminase family. NAD(+) is required as a cofactor.

The catalysed reaction is L-ornithine = L-proline + NH4(+). In terms of biological role, catalyzes the conversion of ornithine to proline, with the release of ammonia. The sequence is that of Ornithine cyclodeaminase from Methanococcus maripaludis (strain DSM 14266 / JCM 13030 / NBRC 101832 / S2 / LL).